The primary structure comprises 686 residues: Methionine--tRNA ligase (686 aa).

The 'HIGH' region signature appears at 15–25; sequence PYANGSIHLGH. Residues Cys146, Cys149, Cys159, and Cys162 each contribute to the Zn(2+) site. The 'KMSKS' region motif lies at 332-336; that stretch reads KMSKS. Residue Lys335 participates in ATP binding. Positions 585–686 constitute a tRNA-binding domain; the sequence is AFEAVDMRIA…EGAQPGMRVM (102 aa).

It belongs to the class-I aminoacyl-tRNA synthetase family. MetG type 1 subfamily. In terms of assembly, homodimer. Zn(2+) is required as a cofactor.

It localises to the cytoplasm. The catalysed reaction is tRNA(Met) + L-methionine + ATP = L-methionyl-tRNA(Met) + AMP + diphosphate. Is required not only for elongation of protein synthesis but also for the initiation of all mRNA translation through initiator tRNA(fMet) aminoacylation. The sequence is that of Methionine--tRNA ligase from Aliivibrio fischeri (strain MJ11) (Vibrio fischeri).